The following is a 262-amino-acid chain: Apolipoprotein A-I (262 aa).

An N-terminal signal peptide occupies residues 1–18 (MKAVVLTLAVLFLTGSQA). Repeat copies occupy residues 67 to 88 (LKLL…EQLG) and 89 to 110 (PVTQ…QEMN). The 10 X approximate tandem repeats stretch occupies residues 67-262 (LKLLDNWDTL…DEASKKLNAQ (196 aa)). M109 is modified (methionine sulfoxide). Residues 111–121 (KDLEEVKQKVQ) form a 3; half-length repeat. 5 repeat units span residues 122 to 142 (PYLD…RQKV), 144 to 165 (PLGE…DRLS), 166 to 184 (PLAQ…KQLA), 185 to 206 (PYSD…EGGG), and 207 to 227 (SLAE…EKAK). A 9; half-length repeat occupies 228 to 238 (PALEDLRQGLM). At M238 the chain carries Methionine sulfoxide. The stretch at 239-262 (PVLESLKVSILAAIDEASKKLNAQ) is repeat 10.

The protein belongs to the apolipoprotein A1/A4/E family. In terms of assembly, homodimer. Interacts with APOA1BP and CLU. Component of a sperm activating protein complex (SPAP), consisting of APOA1, an immunoglobulin heavy chain, an immunoglobulin light chain and albumin. Interacts with NDRG1. Interacts with SCGB3A2. Interacts with NAXE and YJEFN3. In terms of processing, glycosylated. Post-translationally, palmitoylated. Phosphorylation sites are present in the extracellular medium. In terms of tissue distribution, major protein of plasma HDL, also found in chylomicrons.

Its subcellular location is the secreted. Its function is as follows. Participates in the reverse transport of cholesterol from tissues to the liver for excretion by promoting cholesterol efflux from tissues and by acting as a cofactor for the lecithin cholesterol acyltransferase (LCAT). As part of the SPAP complex, activates spermatozoa motility. The sequence is that of Apolipoprotein A-I (APOA1) from Pantholops hodgsonii (Chiru).